Reading from the N-terminus, the 521-residue chain is Aspartic proteinase yapsin-1 (521 aa).

Residues 1–17 form the signal peptide; the sequence is MRIWILIFFSFIKLVSS. At 18-500 the chain is on the extracellular side; that stretch reads LQYTGNGVLA…NAVANAGNSF (483 aa). A Peptidase A1 domain is found at 67–409; it reads YTTTLSIGRP…HQSQKMIAIG (343 aa). D85 is an active-site residue. N136, N157, N250, N289, N295, N354, N414, N418, N460, and N484 each carry an N-linked (GlcNAc...) asparagine glycan. The chain crosses the membrane as a helical span at residues 501–521; the sequence is SPLSAMVIMMMSAVFLGLGII.

Belongs to the peptidase A1 family.

The protein localises to the endoplasmic reticulum membrane. Its subcellular location is the secreted. It localises to the cell wall. In terms of biological role, cleaves at paired basic residues. The chain is Aspartic proteinase yapsin-1 (yps1) from Schizosaccharomyces pombe (strain 972 / ATCC 24843) (Fission yeast).